The sequence spans 487 residues: Dihydrofolate synthase/folylpolyglutamate synthase (487 aa).

44 to 46 (DPS) provides a ligand contact to 7,8-dihydropteroate. Residue 74–77 (GKTS) participates in ATP binding. The Mg(2+) site is built by threonine 76 and serine 98. 150–153 (SKFE) is a binding site for 7,8-dihydropteroate. Residue glutamate 174 coordinates Mg(2+). Residue 181 to 183 (WDA) coordinates 7,8-dihydropteroate. Mg(2+)-binding residues include histidine 201 and aspartate 203. ATP-binding positions include asparagine 301, arginine 338, and 351–354 (DAAH). Aspartate 384 is a Mg(2+) binding site.

Belongs to the folylpolyglutamate synthase family. As to quaternary structure, monomer. Mg(2+) serves as cofactor.

It carries out the reaction 7,8-dihydropteroate + L-glutamate + ATP = 7,8-dihydrofolate + ADP + phosphate + H(+). The catalysed reaction is (6S)-5,6,7,8-tetrahydrofolyl-(gamma-L-Glu)(n) + L-glutamate + ATP = (6S)-5,6,7,8-tetrahydrofolyl-(gamma-L-Glu)(n+1) + ADP + phosphate + H(+). The protein operates within cofactor biosynthesis; tetrahydrofolate biosynthesis; 7,8-dihydrofolate from 2-amino-4-hydroxy-6-hydroxymethyl-7,8-dihydropteridine diphosphate and 4-aminobenzoate: step 2/2. It functions in the pathway cofactor biosynthesis; tetrahydrofolylpolyglutamate biosynthesis. Its function is as follows. Catalyzes the addition of a glutamate residue to dihydropteroate (7,8-dihydropteroate or H2Pte) to form dihydrofolate (7,8-dihydrofolate monoglutamate or H2Pte-Glu). Also catalyzes successive additions of L-glutamate to tetrahydrofolate, leading to folylpolyglutamate derivatives. In terms of biological role, is involved in the bioactivation of the antituberculous drug para-aminosalicylic acid (PAS). Is able to use hydroxy-dihydropteroate (H2PtePAS) as substrate, which is the product formed by the action of DHPS (FolP1) on PAS, leading to hydroxy-dihydrofolate (H2PtePAS-Glu). This compound inhibits dihydrofolate reductase DHFR (DfrA), the next enzyme in the folate pathway, and thus disrupts the folate-dependent metabolic pathways. The sequence is that of Dihydrofolate synthase/folylpolyglutamate synthase from Mycobacterium tuberculosis (strain ATCC 25618 / H37Rv).